Reading from the N-terminus, the 218-residue chain is MAAAGRSALAIDFVGGAVGYKLRSGAARSHALLKATGMAPGRALQVIDATAGLGRDAFLLASMGASVTLIERSPQVHALLAQGLAAAQAESAELAGVVARMTLIQGDARDLLPTLQADVVTVDPMHPERTKTALVKQEMRLLRDLVGADPDVCELMQAALSARCGRVVLKWPLRAEPLAGVRKPSYQIAGKTVRYDVFVLPRGAAEERAPGADAALNP.

S-adenosyl-L-methionine-binding positions include Arg-55–Asp-56, Glu-71–Arg-72, and Asp-123.

It belongs to the methyltransferase superfamily. RsmJ family.

The protein resides in the cytoplasm. It catalyses the reaction guanosine(1516) in 16S rRNA + S-adenosyl-L-methionine = N(2)-methylguanosine(1516) in 16S rRNA + S-adenosyl-L-homocysteine + H(+). Its function is as follows. Specifically methylates the guanosine in position 1516 of 16S rRNA. The polypeptide is Ribosomal RNA small subunit methyltransferase J (Rhodopseudomonas palustris (strain HaA2)).